The sequence spans 619 residues: tRNA uridine 5-carboxymethylaminomethyl modification enzyme MnmG (619 aa).

FAD is bound by residues 14 to 19 (GAGHAG), valine 126, and serine 181. 273–287 (GPRYCPSIEDKIMRF) contacts NAD(+). Position 370 (glutamine 370) interacts with FAD.

It belongs to the MnmG family. In terms of assembly, homodimer. Heterotetramer of two MnmE and two MnmG subunits. Requires FAD as cofactor.

The protein resides in the cytoplasm. Functionally, NAD-binding protein involved in the addition of a carboxymethylaminomethyl (cmnm) group at the wobble position (U34) of certain tRNAs, forming tRNA-cmnm(5)s(2)U34. This Syntrophotalea carbinolica (strain DSM 2380 / NBRC 103641 / GraBd1) (Pelobacter carbinolicus) protein is tRNA uridine 5-carboxymethylaminomethyl modification enzyme MnmG.